We begin with the raw amino-acid sequence, 275 residues long: Large ribosomal subunit protein uL2 (275 aa).

Disordered regions lie at residues K38–K59 and G222–K275. 2 stretches are compositionally biased toward basic residues: residues K39–K59 and M254–K275.

The protein belongs to the universal ribosomal protein uL2 family. As to quaternary structure, part of the 50S ribosomal subunit. Forms a bridge to the 30S subunit in the 70S ribosome.

Its function is as follows. One of the primary rRNA binding proteins. Required for association of the 30S and 50S subunits to form the 70S ribosome, for tRNA binding and peptide bond formation. It has been suggested to have peptidyltransferase activity; this is somewhat controversial. Makes several contacts with the 16S rRNA in the 70S ribosome. The protein is Large ribosomal subunit protein uL2 of Herpetosiphon aurantiacus (strain ATCC 23779 / DSM 785 / 114-95).